The primary structure comprises 804 residues: Phenylalanine--tRNA ligase beta subunit (804 aa).

A tRNA-binding domain is found at 40–161; the sequence is FSMIDYLIIG…KANLGDTEVY (122 aa). The 74-residue stretch at 413–486 folds into the B5 domain; the sequence is EYHQQVKVNY…KILNINLFQP (74 aa). Mg(2+)-binding residues include D464, D470, E473, and E474. Residues 710–804 enclose the FDX-ACB domain; that stretch reads DHYQEVTRDI…DLMKTKQILI (95 aa).

This sequence belongs to the phenylalanyl-tRNA synthetase beta subunit family. Type 1 subfamily. As to quaternary structure, tetramer of two alpha and two beta subunits. The cofactor is Mg(2+).

The protein resides in the cytoplasm. It catalyses the reaction tRNA(Phe) + L-phenylalanine + ATP = L-phenylalanyl-tRNA(Phe) + AMP + diphosphate + H(+). In Mycoplasmoides gallisepticum (strain R(low / passage 15 / clone 2)) (Mycoplasma gallisepticum), this protein is Phenylalanine--tRNA ligase beta subunit.